A 2158-amino-acid chain; its full sequence is Non-reducing polyketide synthase Preu8 (2158 aa).

The N-terminal acylcarrier protein transacylase domain (SAT) stretch occupies residues 4–241; the sequence is LVLGDQVADH…TPIPVFAPYH (238 aa). The region spanning 369–801 is the Ketosynthase family 3 (KS3) domain; the sequence is NDKIAIVGMS…GGNTAIILED (433 aa). Catalysis depends on for beta-ketoacyl synthase activity residues C541, H676, and H719. The segment at 900–1215 is malonyl-CoA:ACP transacylase (MAT) domain; sequence FTFTGQGSQY…ANSVSTLFLA (316 aa). The For acyl/malonyl transferase activity role is filled by S989. Residues 1285–1603 form a product template (PT) domain region; sequence SCQRIVREEL…RRVLNIMMPP (319 aa). The tract at residues 1287–1423 is N-terminal hotdog fold; sequence QRIVREELHA…GTVKYEDVSQ (137 aa). A PKS/mFAS DH domain is found at 1287–1598; the sequence is QRIVREELHA…FQNIARRVLN (312 aa). The active-site Proton acceptor; for dehydratase activity is H1319. Positions 1451 to 1598 are C-terminal hotdog fold; it reads AHKVLRGMAY…FQNIARRVLN (148 aa). D1511 functions as the Proton donor; for dehydratase activity in the catalytic mechanism. The span at 1619–1639 shows a compositional bias: low complexity; that stretch reads KKAASPTLAPAKAAKPAAKTS. Residues 1619 to 1654 form a disordered region; the sequence is KKAASPTLAPAKAAKPAAKTSKPSKARAKPAADSTT. One can recognise a Carrier 1 domain in the interval 1651-1725; that stretch reads DSTTSRVMKI…QMKKFFSQYD (75 aa). The residue at position 1685 (S1685) is an O-(pantetheine 4'-phosphoryl)serine. Residues 1723-1779 form a disordered region; sequence QYDGAPIPDDGDDSDGTDEPSNFSTPSYGADNASTPPSSAPSVNGKSSPENHEVLES. Positions 1731–1740 are enriched in acidic residues; that stretch reads DDGDDSDGTD. Over residues 1743 to 1770 the composition is skewed to polar residues; the sequence is SNFSTPSYGADNASTPPSSAPSVNGKSS. Positions 1779–1853 constitute a Carrier 2 domain; that stretch reads STEVSLARKI…DIENELGMRP (75 aa). S1813 is subject to O-(pantetheine 4'-phosphoryl)serine. Positions 1847 to 1879 are disordered; it reads NELGMRPKPKPKAEAAPPKSSAKASPSANKQPQ. Low complexity predominate over residues 1860 to 1876; sequence EAAPPKSSAKASPSANK. A thioesterase (TE) domain region spans residues 1894–2144; the sequence is SQYPPANSVL…NHFTMMKGDH (251 aa).

Requires pantetheine 4'-phosphate as cofactor.

Its function is as follows. Non-reducing polyketide synthase; part of a gene cluster that mediates the biosynthesis of a yet unidentified natural product. The protein is Non-reducing polyketide synthase Preu8 of Preussia isomera (Coprophilous fungus).